Consider the following 555-residue polypeptide: Hydrogenase-4 component G (555 aa).

This sequence belongs to the complex I 49 kDa subunit family. It depends on [4Fe-4S] cluster as a cofactor.

Possible component of hydrogenase 4. This Escherichia coli (strain K12) protein is Hydrogenase-4 component G.